Here is a 915-residue protein sequence, read N- to C-terminus: Copper-exporting P-type ATPase (915 aa).

HMA domains follow at residues 11 to 72 and 73 to 134; these read NHFA…YQGG and TEQT…YQAI. Cu(+) is bound by residues Cys22, Cys25, Cys84, and Cys87. Residues 142–169 form a disordered region; it reads FAPAASIDEKETDTPDAENSSNTEATEA. Polar residues predominate over residues 158–169; sequence AENSSNTEATEA. Positions 172–236 constitute an HMA 3 domain; it reads QTLSLLIKGM…AIQSSGYQAE (65 aa). Cu(+) is bound by residues Cys183 and Cys186. The next 7 helical transmembrane spans lie at 265 to 285, 293 to 313, 329 to 349, 359 to 379, 474 to 494, 514 to 534, and 541 to 561; these read LGIA…NMMI, VWGG…RHFF, TLVA…VAWP, VYFE…YIET, LVIT…IQMV, VFVP…YLYG, and YMLV…LGLA. Residue Asp598 is the 4-aspartylphosphate intermediate of the active site. Residues Asp796 and Asp800 each coordinate Mg(2+). 2 helical membrane passes run 801–821 and 865–885; these read APAL…DVAI and IPIA…PVVA.

The protein belongs to the cation transport ATPase (P-type) (TC 3.A.3) family. Type IB subfamily.

It localises to the cell membrane. The enzyme catalyses Cu(+)(in) + ATP + H2O = Cu(+)(out) + ADP + phosphate + H(+). Functionally, involved in copper export. This Vibrio cholerae serotype O1 (strain ATCC 39315 / El Tor Inaba N16961) protein is Copper-exporting P-type ATPase (copA).